A 295-amino-acid chain; its full sequence is MDDHAADLLAAVAEVARAAEAADGAAPLDEATWLALRHHPERVRSWVRAGGFALVIGADLSLVVHPQARGRGLGAGLLSSALAGLSAGMPLEAWSHGDHPAAAALARSHGFERARELWVMRRQMASALPQLRAPDGVTVRAFRADSGDAEEVLRVNAAAFAHHPEQGSMDATNLAERMAEPWFDPDGLLLATSAAADGGEQVLGFHWTKVHPGDAGAGAGPGVEVGEVYVVGIDPAAQGRGLGKVLTLAGLHHLAGRGVPEVLLYVESDNRPAIAVYAGLGFTHADDDTHVQYRR.

E30 is a binding site for 1D-myo-inositol 2-(L-cysteinylamino)-2-deoxy-alpha-D-glucopyranoside. Acetyl-CoA is bound at residue 62–64 (LVV). Positions 137 to 295 (VTVRAFRADS…DDDTHVQYRR (159 aa)) constitute an N-acetyltransferase domain. The 1D-myo-inositol 2-(L-cysteinylamino)-2-deoxy-alpha-D-glucopyranoside site is built by E165, K209, and E227. Acetyl-CoA-binding positions include 231-233 (VGI) and 238-244 (QGRGLGK). Y265 is a binding site for 1D-myo-inositol 2-(L-cysteinylamino)-2-deoxy-alpha-D-glucopyranoside.

It belongs to the acetyltransferase family. MshD subfamily. As to quaternary structure, monomer.

The enzyme catalyses 1D-myo-inositol 2-(L-cysteinylamino)-2-deoxy-alpha-D-glucopyranoside + acetyl-CoA = mycothiol + CoA + H(+). In terms of biological role, catalyzes the transfer of acetyl from acetyl-CoA to desacetylmycothiol (Cys-GlcN-Ins) to form mycothiol. In Nocardioides sp. (strain ATCC BAA-499 / JS614), this protein is Mycothiol acetyltransferase.